The sequence spans 490 residues: Betaine aldehyde dehydrogenase (490 aa).

K(+) contacts are provided by threonine 26, isoleucine 27, and aspartate 93. 150 to 152 contributes to the NAD(+) binding site; the sequence is GAW. The active-site Charge relay system is lysine 162. 176–179 contacts NAD(+); it reads KPSE. A K(+)-binding site is contributed by valine 180. Position 230–233 (230–233) interacts with NAD(+); sequence GVAS. Leucine 246 contributes to the K(+) binding site. Residue glutamate 252 is the Proton acceptor of the active site. Positions 254, 286, and 387 each coordinate NAD(+). Cysteine 286 (nucleophile) is an active-site residue. Position 286 is a cysteine sulfenic acid (-SOH) (cysteine 286). Lysine 457 and glycine 460 together coordinate K(+). Glutamate 464 functions as the Charge relay system in the catalytic mechanism.

Belongs to the aldehyde dehydrogenase family. As to quaternary structure, dimer of dimers. It depends on K(+) as a cofactor.

The catalysed reaction is betaine aldehyde + NAD(+) + H2O = glycine betaine + NADH + 2 H(+). The protein operates within amine and polyamine biosynthesis; betaine biosynthesis via choline pathway; betaine from betaine aldehyde: step 1/1. Functionally, involved in the biosynthesis of the osmoprotectant glycine betaine. Catalyzes the irreversible oxidation of betaine aldehyde to the corresponding acid. In Klebsiella pneumoniae (strain 342), this protein is Betaine aldehyde dehydrogenase.